The sequence spans 647 residues: Centrosomal protein of 72 kDa (647 aa).

LRR repeat units follow at residues 29-50 (ELQS…GHSL), 55-76 (GLKS…QYLT), and 77-98 (ALES…FRLH). One can recognise an LRRCT domain in the interval 111-150 (NPVVKVEPDYRLFVVHLLPKLQQLDDRPVRASERKASRLH). 2 stretches are compositionally biased toward basic and acidic residues: residues 152–161 (ASEDSLDSKE) and 220–234 (KGRE…ESRH). Disordered stretches follow at residues 152–176 (ASED…HHPR), 211–256 (PPGS…RETR), and 285–413 (PEAS…ALPG). At serine 237 the chain carries Phosphoserine. Residues 366-377 (SLSRQDSSESRN) are compositionally biased toward basic and acidic residues. Serine 382 is modified (phosphoserine). Basic and acidic residues predominate over residues 390 to 402 (EEQRSRGVTDTRE). A Phosphoserine modification is found at serine 404. Residues 476-620 (SLALESKSLQ…AQHRAEVEQM (145 aa)) adopt a coiled-coil conformation.

This sequence belongs to the CEP72 family. As to quaternary structure, interacts with KIZ, PCM1 and CDK5RAP2.

Its subcellular location is the cytoplasm. The protein localises to the cytoskeleton. It is found in the microtubule organizing center. It localises to the centrosome. The protein resides in the centriolar satellite. Its function is as follows. Involved in the recruitment of key centrosomal proteins to the centrosome. Provides centrosomal microtubule-nucleation activity on the gamma-tubulin ring complexes (gamma-TuRCs) and has critical roles in forming a focused bipolar spindle, which is needed for proper tension generation between sister chromatids. Required for localization of KIZ, AKAP9 and gamma-tubulin ring complexes (gamma-TuRCs). Involved in centriole duplication. Required for CDK5RAP22, CEP152, WDR62 and CEP63 centrosomal localization and promotes the centrosomal localization of CDK2. In Homo sapiens (Human), this protein is Centrosomal protein of 72 kDa (CEP72).